Consider the following 484-residue polypeptide: tRNA sulfurtransferase (484 aa).

The THUMP domain maps to Gln63–Arg167. Residues Leu185–Ile186, Lys267, Gly289, and Gln298 contribute to the ATP site. The cysteines at positions 346 and 458 are disulfide-linked. One can recognise a Rhodanese domain in the interval Ile406–Pro484. Residue Cys458 is the Cysteine persulfide intermediate of the active site.

It belongs to the ThiI family.

The protein resides in the cytoplasm. It catalyses the reaction [ThiI sulfur-carrier protein]-S-sulfanyl-L-cysteine + a uridine in tRNA + 2 reduced [2Fe-2S]-[ferredoxin] + ATP + H(+) = [ThiI sulfur-carrier protein]-L-cysteine + a 4-thiouridine in tRNA + 2 oxidized [2Fe-2S]-[ferredoxin] + AMP + diphosphate. It carries out the reaction [ThiS sulfur-carrier protein]-C-terminal Gly-Gly-AMP + S-sulfanyl-L-cysteinyl-[cysteine desulfurase] + AH2 = [ThiS sulfur-carrier protein]-C-terminal-Gly-aminoethanethioate + L-cysteinyl-[cysteine desulfurase] + A + AMP + 2 H(+). The protein operates within cofactor biosynthesis; thiamine diphosphate biosynthesis. Its function is as follows. Catalyzes the ATP-dependent transfer of a sulfur to tRNA to produce 4-thiouridine in position 8 of tRNAs, which functions as a near-UV photosensor. Also catalyzes the transfer of sulfur to the sulfur carrier protein ThiS, forming ThiS-thiocarboxylate. This is a step in the synthesis of thiazole, in the thiamine biosynthesis pathway. The sulfur is donated as persulfide by IscS. This chain is tRNA sulfurtransferase, found in Shewanella sp. (strain MR-4).